The sequence spans 131 residues: Large ribosomal subunit protein bL12 (131 aa).

Belongs to the bacterial ribosomal protein bL12 family. In terms of assembly, homodimer. Part of the ribosomal stalk of the 50S ribosomal subunit. Forms a multimeric L10(L12)X complex, where L10 forms an elongated spine to which 2 to 4 L12 dimers bind in a sequential fashion. Binds GTP-bound translation factors.

Its function is as follows. Forms part of the ribosomal stalk which helps the ribosome interact with GTP-bound translation factors. Is thus essential for accurate translation. In Prochlorococcus marinus (strain MIT 9313), this protein is Large ribosomal subunit protein bL12.